The primary structure comprises 240 residues: ATP synthase subunit a (240 aa).

The next 5 membrane-spanning stretches (helical) occupy residues 21–41 (LSSM…AMLF), 83–103 (AVTL…FAII), 116–136 (DPTV…FYGV), 184–204 (LLGL…GAAI), and 207–227 (LIWQ…FVML).

It belongs to the ATPase A chain family. F-type ATPases have 2 components, CF(1) - the catalytic core - and CF(0) - the membrane proton channel. CF(1) has five subunits: alpha(3), beta(3), gamma(1), delta(1), epsilon(1). CF(0) has three main subunits: a(1), b(2) and c(9-12). The alpha and beta chains form an alternating ring which encloses part of the gamma chain. CF(1) is attached to CF(0) by a central stalk formed by the gamma and epsilon chains, while a peripheral stalk is formed by the delta and b chains.

The protein localises to the cell membrane. In terms of biological role, key component of the proton channel; it plays a direct role in the translocation of protons across the membrane. This Macrococcus caseolyticus (strain JCSC5402) (Macrococcoides caseolyticum) protein is ATP synthase subunit a.